We begin with the raw amino-acid sequence, 192 residues long: dITP/XTP pyrophosphatase (192 aa).

12 to 17 (TNNENK) serves as a coordination point for substrate. The Mg(2+) site is built by Glu41 and Asp70. Asp70 serves as the catalytic Proton acceptor. Residues Ser71, 145-148 (FGFD), Lys168, and 173-174 (HR) contribute to the substrate site.

The protein belongs to the HAM1 NTPase family. As to quaternary structure, homodimer. Mg(2+) serves as cofactor.

The enzyme catalyses XTP + H2O = XMP + diphosphate + H(+). The catalysed reaction is dITP + H2O = dIMP + diphosphate + H(+). It catalyses the reaction ITP + H2O = IMP + diphosphate + H(+). Functionally, pyrophosphatase that catalyzes the hydrolysis of nucleoside triphosphates to their monophosphate derivatives, with a high preference for the non-canonical purine nucleotides XTP (xanthosine triphosphate), dITP (deoxyinosine triphosphate) and ITP. Seems to function as a house-cleaning enzyme that removes non-canonical purine nucleotides from the nucleotide pool, thus preventing their incorporation into DNA/RNA and avoiding chromosomal lesions. The chain is dITP/XTP pyrophosphatase from Saccharolobus solfataricus (strain ATCC 35092 / DSM 1617 / JCM 11322 / P2) (Sulfolobus solfataricus).